Consider the following 89-residue polypeptide: Elongation factor 1-beta (89 aa).

This sequence belongs to the EF-1-beta/EF-1-delta family.

Promotes the exchange of GDP for GTP in EF-1-alpha/GDP, thus allowing the regeneration of EF-1-alpha/GTP that could then be used to form the ternary complex EF-1-alpha/GTP/AAtRNA. In Methanocella arvoryzae (strain DSM 22066 / NBRC 105507 / MRE50), this protein is Elongation factor 1-beta.